The following is a 95-amino-acid chain: Small ribosomal subunit protein uS14 (95 aa).

It belongs to the universal ribosomal protein uS14 family. Part of the 30S ribosomal subunit. Contacts proteins S3 and S10.

In terms of biological role, binds 16S rRNA, required for the assembly of 30S particles and may also be responsible for determining the conformation of the 16S rRNA at the A site. This chain is Small ribosomal subunit protein uS14 (rpsN), found in Carsonella ruddii.